A 398-amino-acid polypeptide reads, in one-letter code: Acetate kinase (398 aa).

A Mg(2+)-binding site is contributed by Asn7. Lys14 contributes to the ATP binding site. Substrate is bound at residue Arg91. The active-site Proton donor/acceptor is the Asp148. Residues 208–212 (HIGNG), 283–285 (DMR), and 331–335 (GVGEN) each bind ATP. Glu385 is a Mg(2+) binding site.

This sequence belongs to the acetokinase family. Homodimer. The cofactor is Mg(2+). Requires Mn(2+) as cofactor.

It localises to the cytoplasm. The enzyme catalyses acetate + ATP = acetyl phosphate + ADP. It participates in metabolic intermediate biosynthesis; acetyl-CoA biosynthesis; acetyl-CoA from acetate: step 1/2. Its function is as follows. Catalyzes the formation of acetyl phosphate from acetate and ATP. Can also catalyze the reverse reaction. In Porphyromonas gingivalis (strain ATCC BAA-308 / W83), this protein is Acetate kinase.